Consider the following 223-residue polypeptide: Deoxyribose-phosphate aldolase (223 aa).

Aspartate 89 serves as the catalytic Proton donor/acceptor. Lysine 152 (schiff-base intermediate with acetaldehyde) is an active-site residue. Lysine 181 functions as the Proton donor/acceptor in the catalytic mechanism.

It belongs to the DeoC/FbaB aldolase family. DeoC type 1 subfamily.

The protein resides in the cytoplasm. The enzyme catalyses 2-deoxy-D-ribose 5-phosphate = D-glyceraldehyde 3-phosphate + acetaldehyde. It functions in the pathway carbohydrate degradation; 2-deoxy-D-ribose 1-phosphate degradation; D-glyceraldehyde 3-phosphate and acetaldehyde from 2-deoxy-alpha-D-ribose 1-phosphate: step 2/2. In terms of biological role, catalyzes a reversible aldol reaction between acetaldehyde and D-glyceraldehyde 3-phosphate to generate 2-deoxy-D-ribose 5-phosphate. The protein is Deoxyribose-phosphate aldolase of Bacillus cereus (strain ZK / E33L).